A 300-amino-acid polypeptide reads, in one-letter code: Lysenin-related protein 2 (300 aa).

The tract at residues 12–35 (EQIEVDVVAVWKEGYVYENRGSTS) is N-terminal cap domain. Positions 36 to 109 (VEQKIKITKG…SKEIEHTITI (74 aa)) are beta-hairpin domain. The N-terminal cap domain stretch occupies residues 110-158 (PPTSKFTRWQLNADVGGADIEYMYLIDEVTPIGGTLSIPQVIKSRAKIL). Positions 159 to 299 (VGREIYLGET…EDKWILEVVK (141 aa)) are C-terminal receptor-binding domain. An N-(acyl)-sphingosylphosphocholine-binding residues include K187, S229, Y235, and Y284. A disulfide bridge connects residues C274 and C285.

Belongs to the lysenin family. As to quaternary structure, binds to sphingomyelin as a monomer by using its C-terminal domain. Forms a nonamer when sphingomyelin/LRP-2 ratio is lower than ca 500. Oligomerization, but not binding, is influenced by the fluidity of sphingomyelin. As to expression, expressed by coelomocytes.

The protein localises to the secreted. It is found in the target cell membrane. Pore-forming toxin that specifically binds sphingomyelin in the plasma membrane of various cells. Has hemolytic activity. It also has antibacterial activities against B.megaterium. The chain is Lysenin-related protein 2 from Eisenia fetida (Red wiggler worm).